The following is a 418-amino-acid chain: 3-isopropylmalate dehydratase large subunit 1 (418 aa).

[4Fe-4S] cluster contacts are provided by Cys-298, Cys-358, and Cys-361.

This sequence belongs to the aconitase/IPM isomerase family. LeuC type 2 subfamily. In terms of assembly, heterodimer of LeuC and LeuD. Requires [4Fe-4S] cluster as cofactor.

The enzyme catalyses (2R,3S)-3-isopropylmalate = (2S)-2-isopropylmalate. The protein operates within amino-acid biosynthesis; L-leucine biosynthesis; L-leucine from 3-methyl-2-oxobutanoate: step 2/4. In terms of biological role, catalyzes the isomerization between 2-isopropylmalate and 3-isopropylmalate, via the formation of 2-isopropylmaleate. This chain is 3-isopropylmalate dehydratase large subunit 1, found in Methanopyrus kandleri (strain AV19 / DSM 6324 / JCM 9639 / NBRC 100938).